A 173-amino-acid polypeptide reads, in one-letter code: 2-C-methyl-D-erythritol 2,4-cyclodiphosphate synthase (173 aa).

A divalent metal cation contacts are provided by aspartate 17 and histidine 19. Residues 17 to 19 (DVH) and 49 to 50 (HS) each bind 4-CDP-2-C-methyl-D-erythritol 2-phosphate. Histidine 57 serves as a coordination point for a divalent metal cation. 4-CDP-2-C-methyl-D-erythritol 2-phosphate is bound by residues 76-80 (FPNTD), 147-150 (TTTE), and arginine 157.

This sequence belongs to the IspF family. As to quaternary structure, homotrimer. It depends on a divalent metal cation as a cofactor.

The catalysed reaction is 4-CDP-2-C-methyl-D-erythritol 2-phosphate = 2-C-methyl-D-erythritol 2,4-cyclic diphosphate + CMP. It functions in the pathway isoprenoid biosynthesis; isopentenyl diphosphate biosynthesis via DXP pathway; isopentenyl diphosphate from 1-deoxy-D-xylulose 5-phosphate: step 4/6. Functionally, involved in the biosynthesis of isopentenyl diphosphate (IPP) and dimethylallyl diphosphate (DMAPP), two major building blocks of isoprenoid compounds. Catalyzes the conversion of 4-diphosphocytidyl-2-C-methyl-D-erythritol 2-phosphate (CDP-ME2P) to 2-C-methyl-D-erythritol 2,4-cyclodiphosphate (ME-CPP) with a corresponding release of cytidine 5-monophosphate (CMP). The polypeptide is 2-C-methyl-D-erythritol 2,4-cyclodiphosphate synthase (Ehrlichia ruminantium (strain Gardel)).